The following is a 75-amino-acid chain: Sec-independent protein translocase protein TatA (75 aa).

A helical transmembrane segment spans residues M1–G21. Composition is skewed to basic and acidic residues over residues M43–Q54 and A66–H75. The interval M43–H75 is disordered.

The protein belongs to the TatA/E family. As to quaternary structure, the Tat system comprises two distinct complexes: a TatABC complex, containing multiple copies of TatA, TatB and TatC subunits, and a separate TatA complex, containing only TatA subunits. Substrates initially bind to the TatABC complex, which probably triggers association of the separate TatA complex to form the active translocon.

It localises to the cell inner membrane. Part of the twin-arginine translocation (Tat) system that transports large folded proteins containing a characteristic twin-arginine motif in their signal peptide across membranes. TatA could form the protein-conducting channel of the Tat system. This chain is Sec-independent protein translocase protein TatA, found in Aromatoleum aromaticum (strain DSM 19018 / LMG 30748 / EbN1) (Azoarcus sp. (strain EbN1)).